The sequence spans 1733 residues: Serine-aspartate repeat-containing protein F (1733 aa).

The signal sequence occupies residues 1–45; sequence MKKRRQGPINKRVDFLSNKVNKYSIRKFTVGTASILVGATLMFGA. Residues 46–678 are ligand binding A region; the sequence is ADNEAKAAED…GSSTAQGDNP (633 aa). 2 disordered regions span residues 51 to 269 and 332 to 351; these read KAAE…SVND and PLALNRSQSKNSPHKSASPR. Residues 61–74 show a composition bias toward basic and acidic residues; that stretch reads ASKEEQKGSRDNEN. 2 stretches are compositionally biased toward polar residues: residues 85 to 99 and 146 to 168; these read GSHSSEKTTNVNNAT and PKTSTTQQDSTEKNNPSLKDNLN. Positions 175-184 are enriched in basic and acidic residues; sequence KESKTDEHST. Residues 186-226 show a composition bias toward polar residues; the sequence is QAQMSTNKSNLDTNDSPTQSEKTSSQANNDSTDNQSAPSKQ. Basic and acidic residues predominate over residues 227-253; that stretch reads LDSKPSEQKVYKTKFNDEPTQDVEHTT. Polar residues-rich tracts occupy residues 255-266 and 336-346; these read KLKTPSVSTDSS and NRSQSKNSPHK. 4 CNA-B domains span residues 679-797, 798-907, 908-1018, and 1019-1129; these read TYSL…YLTP, KYNV…FYKP, TYNL…YKTP, and KYSV…FDDD. Residues 679 to 1129 are type I collagen binding region; sequence TYSLGDYVWL…SIDNGYFDDD (451 aa). The interval 862–890 is disordered; sequence FETPEGYTPTKQNSGSDEGKDSNGTKTTV. The tract at residues 1085–1708 is disordered; that stretch reads KPEGMTQTTA…ANEDHDSKGT (624 aa). Residues 1107-1119 are compositionally biased toward basic and acidic residues; the sequence is EDVRVTITDHDDF. Residues 1125–1684 are compositionally biased toward acidic residues; sequence YFDDDSDSDS…DSDSDSDSDS (560 aa). Residues 1685 to 1706 are compositionally biased toward basic and acidic residues; the sequence is DSDKNAKDKLPDTGANEDHDSK. The LPXTG sorting signal motif lies at 1694–1698; sequence LPDTG. Thr-1697 is modified (pentaglycyl murein peptidoglycan amidated threonine). Positions 1698–1733 are cleaved as a propeptide — removed by sortase; sequence GANEDHDSKGTLLGTLFAGLGALLLGRRRKKDNKEK.

It belongs to the serine-aspartate repeat-containing protein (SDr) family.

It localises to the secreted. The protein localises to the cell wall. Binds to type I collagen via alpha-2(I) or alpha-1(I) chains, although its affinity for the alpha-1(I) chain is significantly higher. Involved in bacterial adherence to transcutaneous drivelines from explanted ventricular assist devices. This Staphylococcus epidermidis protein is Serine-aspartate repeat-containing protein F (sdrF).